The chain runs to 630 residues: 1-deoxy-D-xylulose-5-phosphate synthase (630 aa).

Residues H72 and 113–115 (GHS) each bind thiamine diphosphate. Residue D144 participates in Mg(2+) binding. Thiamine diphosphate-binding positions include 145–146 (GA), N173, Y284, and E367. Mg(2+) is bound at residue N173.

The protein belongs to the transketolase family. DXPS subfamily. Homodimer. Mg(2+) serves as cofactor. Thiamine diphosphate is required as a cofactor.

The catalysed reaction is D-glyceraldehyde 3-phosphate + pyruvate + H(+) = 1-deoxy-D-xylulose 5-phosphate + CO2. It functions in the pathway metabolic intermediate biosynthesis; 1-deoxy-D-xylulose 5-phosphate biosynthesis; 1-deoxy-D-xylulose 5-phosphate from D-glyceraldehyde 3-phosphate and pyruvate: step 1/1. Its function is as follows. Catalyzes the acyloin condensation reaction between C atoms 2 and 3 of pyruvate and glyceraldehyde 3-phosphate to yield 1-deoxy-D-xylulose-5-phosphate (DXP). This is 1-deoxy-D-xylulose-5-phosphate synthase from Geobacillus sp. (strain WCH70).